The chain runs to 634 residues: Chaperone protein HtpG (634 aa).

The interval 1–342 is a; substrate-binding; sequence MTVDTDKQTL…SSDLSLNVSR (342 aa). The interval 343 to 559 is b; that stretch reads EILQSGPVVD…QGDLGLQMRQ (217 aa). Residues 560–634 form a c region; sequence LLEASGQAVP…LNKLLLELSV (75 aa).

Belongs to the heat shock protein 90 family. As to quaternary structure, homodimer.

Its subcellular location is the cytoplasm. Molecular chaperone. Has ATPase activity. This is Chaperone protein HtpG from Xanthomonas oryzae pv. oryzae (strain MAFF 311018).